The sequence spans 185 residues: Elongation factor P (185 aa).

Belongs to the elongation factor P family.

The protein resides in the cytoplasm. It participates in protein biosynthesis; polypeptide chain elongation. In terms of biological role, involved in peptide bond synthesis. Stimulates efficient translation and peptide-bond synthesis on native or reconstituted 70S ribosomes in vitro. Probably functions indirectly by altering the affinity of the ribosome for aminoacyl-tRNA, thus increasing their reactivity as acceptors for peptidyl transferase. The polypeptide is Elongation factor P (Gloeothece citriformis (strain PCC 7424) (Cyanothece sp. (strain PCC 7424))).